Consider the following 338-residue polypeptide: Anthranilate phosphoribosyltransferase (338 aa).

5-phospho-alpha-D-ribose 1-diphosphate-binding positions include glycine 81, 84–85, threonine 89, 91–94, 109–117, and alanine 121; these read GD, NIST, and KHGNRALSS. Glycine 81 contacts anthranilate. Residue serine 93 participates in Mg(2+) binding. Asparagine 112 lines the anthranilate pocket. Position 167 (arginine 167) interacts with anthranilate. Residues aspartate 225 and glutamate 226 each coordinate Mg(2+).

This sequence belongs to the anthranilate phosphoribosyltransferase family. Homodimer. The cofactor is Mg(2+).

The catalysed reaction is N-(5-phospho-beta-D-ribosyl)anthranilate + diphosphate = 5-phospho-alpha-D-ribose 1-diphosphate + anthranilate. The protein operates within amino-acid biosynthesis; L-tryptophan biosynthesis; L-tryptophan from chorismate: step 2/5. Catalyzes the transfer of the phosphoribosyl group of 5-phosphorylribose-1-pyrophosphate (PRPP) to anthranilate to yield N-(5'-phosphoribosyl)-anthranilate (PRA). This chain is Anthranilate phosphoribosyltransferase, found in Rhizobium etli (strain CIAT 652).